The following is a 223-amino-acid chain: Endonuclease NucS (223 aa).

It belongs to the NucS endonuclease family.

The protein localises to the cytoplasm. Its function is as follows. Cleaves both 3' and 5' ssDNA extremities of branched DNA structures. This Mycobacterium marinum (strain ATCC BAA-535 / M) protein is Endonuclease NucS.